The sequence spans 374 residues: tRNA (guanine(26)-N(2))-dimethyltransferase (374 aa).

A Trm1 methyltransferase domain is found at 1–367 (MILKEGEVVF…ATLKNVIEAI (367 aa)). The S-adenosyl-L-methionine site is built by arginine 34, arginine 66, aspartate 86, aspartate 113, and alanine 114.

This sequence belongs to the class I-like SAM-binding methyltransferase superfamily. Trm1 family.

It carries out the reaction guanosine(26) in tRNA + 2 S-adenosyl-L-methionine = N(2)-dimethylguanosine(26) in tRNA + 2 S-adenosyl-L-homocysteine + 2 H(+). Functionally, dimethylates a single guanine residue at position 26 of a number of tRNAs using S-adenosyl-L-methionine as donor of the methyl groups. The sequence is that of tRNA (guanine(26)-N(2))-dimethyltransferase from Methanocaldococcus jannaschii (strain ATCC 43067 / DSM 2661 / JAL-1 / JCM 10045 / NBRC 100440) (Methanococcus jannaschii).